Here is a 234-residue protein sequence, read N- to C-terminus: Ribonuclease HII (234 aa).

Residues glycine 30–leucine 221 form the RNase H type-2 domain. A divalent metal cation-binding residues include aspartate 36, glutamate 37, and aspartate 130.

Belongs to the RNase HII family. Mn(2+) is required as a cofactor. The cofactor is Mg(2+).

The protein resides in the cytoplasm. The enzyme catalyses Endonucleolytic cleavage to 5'-phosphomonoester.. Its function is as follows. Endonuclease that specifically degrades the RNA of RNA-DNA hybrids. The polypeptide is Ribonuclease HII (Mycobacteroides abscessus (strain ATCC 19977 / DSM 44196 / CCUG 20993 / CIP 104536 / JCM 13569 / NCTC 13031 / TMC 1543 / L948) (Mycobacterium abscessus)).